We begin with the raw amino-acid sequence, 325 residues long: MNSSSTLTVLNLTLNASEDGILGSNVKNKSLACEEMGIAVEVFLTLGLVSLLENILVIGAIVKNKNLHSPMYFFVGSLAVADMLVSMSNAWETVTIYLLNNKHLVIADTFVRHIDNVFDSMICISVVASMCSLLAIAVDRYITIFYALRYHHIMTARRSGVIIACIWTFCISCGIVFIIYYESKYVIICLISMFFTMLFFMVSLYIHMFLLARNHVKRIAASPRYNSVRQRTSMKGAITLTMLLGIFIVCWSPFFLHLILMISCPQNVYCSCFMSYFNMYLILIMCNSVIDPLIYALRSQEMRRTFKEIVCCHGFRRPCRLLGGY.

The Extracellular segment spans residues 1–37; sequence MNSSSTLTVLNLTLNASEDGILGSNVKNKSLACEEMG. N-linked (GlcNAc...) asparagine glycosylation is found at N2, N11, N15, and N28. Residues 38 to 61 form a helical membrane-spanning segment; that stretch reads IAVEVFLTLGLVSLLENILVIGAI. Residues 62 to 73 are Cytoplasmic-facing; that stretch reads VKNKNLHSPMYF. The helical transmembrane segment at 74–97 threads the bilayer; the sequence is FVGSLAVADMLVSMSNAWETVTIY. The Extracellular portion of the chain corresponds to 98–114; sequence LLNNKHLVIADTFVRHI. A helical transmembrane segment spans residues 115–138; sequence DNVFDSMICISVVASMCSLLAIAV. Over 139 to 155 the chain is Cytoplasmic; that stretch reads DRYITIFYALRYHHIMT. Residues 156–179 traverse the membrane as a helical segment; it reads ARRSGVIIACIWTFCISCGIVFII. Over 180-186 the chain is Extracellular; it reads YYESKYV. A helical transmembrane segment spans residues 187–211; the sequence is IICLISMFFTMLFFMVSLYIHMFLL. The Cytoplasmic portion of the chain corresponds to 212-239; that stretch reads ARNHVKRIAASPRYNSVRQRTSMKGAIT. The chain crosses the membrane as a helical span at residues 240–265; the sequence is LTMLLGIFIVCWSPFFLHLILMISCP. The Extracellular segment spans residues 266 to 273; that stretch reads QNVYCSCF. Residues 274-297 form a helical membrane-spanning segment; it reads MSYFNMYLILIMCNSVIDPLIYAL. The Cytoplasmic portion of the chain corresponds to 298–325; sequence RSQEMRRTFKEIVCCHGFRRPCRLLGGY. Residues C311 and C312 are each lipidated (S-palmitoyl cysteine).

It belongs to the G-protein coupled receptor 1 family. Skin, adrenal gland, skeletal muscle, bone marrow, spleen, thymus, gonads, uterus and brain.

It localises to the cell membrane. Receptor for MSH (alpha, beta and gamma) and ACTH. The activity of this receptor is mediated by G proteins which activate adenylate cyclase. This receptor is a possible mediator of the immunomodulation properties of melanocortins. This is Melanocortin receptor 5 (Mc5r) from Mus musculus (Mouse).